Here is an 82-residue protein sequence, read N- to C-terminus: Protein CYSTEINE-RICH TRANSMEMBRANE MODULE 13 (82 aa).

A disordered region spans residues 1 to 58 (MYHQEQHPVGAPPPQGYPPKDGYPPAGYPPAGYPPPGYAQGYPAQGYPPPQYSQAPQQ). The span at 26-37 (AGYPPAGYPPPG) shows a compositional bias: pro residues. Residues 59-76 (KQNAGMLEGCLAALCCCC) form a helical membrane-spanning segment.

This sequence belongs to the CYSTM1 family. Homodimer and heterodimers. Interacts with CYSTM7, CYTSM3, CYTSM4, CYTSM5, CYTSM6, CYTSM9, CYTSM10 and CYTSM11. Binds weakly to CYSTM1 and CYSTM2. In terms of tissue distribution, expressed in root meristem, root vasculature, leaf vasculature and floral organ primordia. Mostly expressed in roots and flowers and, to a lower extent, in stems, siliques and leaves.

Its subcellular location is the cell membrane. Required for the promotion of megasporogenesis, or promotion of germ cell formation from somatic precursor cells. Acts redundantly with WIH2. Functions in a genetic pathway downstream of SPL/NZZ and WUS and together with TRN2 in promoting megasporogenesis. Involved in resistance to abiotic stress. The polypeptide is Protein CYSTEINE-RICH TRANSMEMBRANE MODULE 13 (Arabidopsis thaliana (Mouse-ear cress)).